Here is a 283-residue protein sequence, read N- to C-terminus: Formamidopyrimidine-DNA glycosylase (283 aa).

Residue Pro-2 is the Schiff-base intermediate with DNA of the active site. Glu-3 acts as the Proton donor in catalysis. Lys-58 (proton donor; for beta-elimination activity) is an active-site residue. DNA-binding residues include His-100, Arg-119, and Arg-162. An FPG-type zinc finger spans residues 247-283 (RVYGREGQPCVTPGCRGLVGRIVQSGRSSFHCPECQR). Catalysis depends on Arg-273, which acts as the Proton donor; for delta-elimination activity.

This sequence belongs to the FPG family. Monomer. Zn(2+) is required as a cofactor.

It catalyses the reaction Hydrolysis of DNA containing ring-opened 7-methylguanine residues, releasing 2,6-diamino-4-hydroxy-5-(N-methyl)formamidopyrimidine.. The catalysed reaction is 2'-deoxyribonucleotide-(2'-deoxyribose 5'-phosphate)-2'-deoxyribonucleotide-DNA = a 3'-end 2'-deoxyribonucleotide-(2,3-dehydro-2,3-deoxyribose 5'-phosphate)-DNA + a 5'-end 5'-phospho-2'-deoxyribonucleoside-DNA + H(+). Involved in base excision repair of DNA damaged by oxidation or by mutagenic agents. Acts as a DNA glycosylase that recognizes and removes damaged bases. Has a preference for oxidized purines, such as 7,8-dihydro-8-oxoguanine (8-oxoG). Has AP (apurinic/apyrimidinic) lyase activity and introduces nicks in the DNA strand. Cleaves the DNA backbone by beta-delta elimination to generate a single-strand break at the site of the removed base with both 3'- and 5'-phosphates. The protein is Formamidopyrimidine-DNA glycosylase of Cereibacter sphaeroides (strain ATCC 17025 / ATH 2.4.3) (Rhodobacter sphaeroides).